The sequence spans 298 residues: Mitochondrial 2-oxodicarboxylate carrier (298 aa).

3 Solcar repeats span residues 10–99 (HETC…YKKF), 106–195 (SPGL…VKDN), and 204–293 (LEFL…TYAW). The next 6 membrane-spanning stretches (helical) occupy residues 16–36 (VAAG…LDVV), 69–88 (FGFY…KRAV), 112–132 (PIAG…FEVV), 166–186 (GLNK…MTYF), 204–224 (LEFL…SVFN), and 276–296 (LGPG…WLQE).

The protein belongs to the mitochondrial carrier (TC 2.A.29) family. In terms of tissue distribution, widely expressed.

It localises to the mitochondrion inner membrane. The enzyme catalyses 2-oxoadipate(in) + 2-oxoglutarate(out) = 2-oxoadipate(out) + 2-oxoglutarate(in). It catalyses the reaction hexanedioate(in) + 2-oxoglutarate(out) = hexanedioate(out) + 2-oxoglutarate(in). It carries out the reaction L-2-aminoadipate(in) + 2-oxoglutarate(out) = L-2-aminoadipate(out) + 2-oxoglutarate(in). The catalysed reaction is glutarate(in) + 2-oxoglutarate(out) = glutarate(out) + 2-oxoglutarate(in). The enzyme catalyses 2-oxoheptanedioate(in) + 2-oxoglutarate(out) = 2-oxoheptanedioate(out) + 2-oxoglutarate(in). It catalyses the reaction heptanedioate(in) + 2-oxoglutarate(out) = heptanedioate(out) + 2-oxoglutarate(in). It carries out the reaction citrate(in) + 2-oxoglutarate(out) = citrate(out) + 2-oxoglutarate(in). In terms of biological role, transports dicarboxylates across the inner membranes of mitochondria by a counter-exchange mechanism. Can transport 2-oxoadipate (2-oxohexanedioate), 2-oxoglutarate, adipate (hexanedioate), glutarate, and to a lesser extent, pimelate (heptanedioate), 2-oxopimelate (2-oxoheptanedioate), 2-aminoadipate (2-aminohexanedioate), oxaloacetate, and citrate. Plays a central role in catabolism of lysine, hydroxylysine, and tryptophan, by transporting common metabolite intermediates (such as 2-oxoadipate) into the mitochondria, where it is converted into acetyl-CoA and can enter the citric acid (TCA) cycle. The sequence is that of Mitochondrial 2-oxodicarboxylate carrier (Slc25a21) from Rattus norvegicus (Rat).